Consider the following 655-residue polypeptide: Alpha-L-iduronidase (655 aa).

A signal peptide spans 1–25; it reads MRPPGPRAPGLALLAALLAAPRALA. Residues P53, L55, and H57 each coordinate alpha-D-mannopyranose. H90 serves as a coordination point for alpha-L-iduronate. N109 carries N-linked (GlcNAc...) asparagine glycosylation. Alpha-L-iduronate-binding residues include N180 and E181. The Proton donor role is filled by E181. N-linked (GlcNAc...) asparagine glycans are attached at residues N189 and N242. Positions 263, 298, and 304 each coordinate alpha-L-iduronate. The active-site Nucleophile is E298. W305 lines the alpha-D-mannopyranose pocket. N-linked (GlcNAc...) asparagine glycosylation occurs at N335. Positions 348 and 362 each coordinate alpha-L-iduronate. N-linked (GlcNAc...) asparagine glycosylation is found at N371 and N414. C540 and C576 form a disulfide bridge.

The protein belongs to the glycosyl hydrolase 39 family. In terms of assembly, monomer. In terms of processing, a smaller 63 kDa protein probably arises from IDUA protein by proteolytic cleavage. Post-translationally, N-glycosylation contributes to substrate binding and is required for full enzymatic activity. Detected in testis (at protein level). Expressed ubiquitously.

It is found in the lysosome. It catalyses the reaction Hydrolysis of unsulfated alpha-L-iduronosidic linkages in dermatan sulfate.. This is Alpha-L-iduronidase (IDUA) from Canis lupus familiaris (Dog).